A 275-amino-acid chain; its full sequence is 4,5-DOPA dioxygenase extradiol 1 (275 aa).

Residues histidine 22, histidine 60, histidine 182, and histidine 236 each coordinate Zn(2+).

Belongs to the DODA-type extradiol aromatic ring-opening dioxygenase family. Zn(2+) serves as cofactor.

The enzyme catalyses L-dopa + O2 = 4-(L-alanin-3-yl)-2-hydroxy-cis,cis-muconate 6-semialdehyde + H(+). Its pathway is pigment biosynthesis; betalain biosynthesis. Its function is as follows. Opens the cyclic ring of dihydroxy-phenylalanine (DOPA) between carbons 4 and 5, thus producing an unstable seco-DOPA that rearranges nonenzymatically to betalamic acid. The chain is 4,5-DOPA dioxygenase extradiol 1 from Beta vulgaris (Sugar beet).